The primary structure comprises 118 residues: uncharacterized protein (118 aa).

The HTH hxlR-type domain occupies Cys-6–Tyr-104.

This is an uncharacterized protein from Bacillus subtilis (strain 168).